The primary structure comprises 93 residues: MADITDIKTILYTEKTLNLQEGGMVVIQTSPKMTKTSLKAVLKEYFGFTPLKINSLRIDGKVKRFRGRLGVRDNFKKFYVKLPEGVSLENVGA.

The protein belongs to the universal ribosomal protein uL23 family. Part of the 50S ribosomal subunit. Contacts protein L29, and trigger factor when it is bound to the ribosome.

Functionally, one of the early assembly proteins it binds 23S rRNA. One of the proteins that surrounds the polypeptide exit tunnel on the outside of the ribosome. Forms the main docking site for trigger factor binding to the ribosome. In Campylobacter hominis (strain ATCC BAA-381 / DSM 21671 / CCUG 45161 / LMG 19568 / NCTC 13146 / CH001A), this protein is Large ribosomal subunit protein uL23.